We begin with the raw amino-acid sequence, 695 residues long: Lasso peptide isopeptidase AtxE2 (695 aa).

The N-terminal stretch at 1 to 30 is a signal peptide; sequence MRSSKIRCPGAIRVGTLVTAFGCLPHVAFA. Disulfide bonds link Cys296/Cys301 and Cys354/Cys363. Ser527 serves as the catalytic Nucleophile. A disulfide bridge links Cys551 with Cys552. Catalysis depends on charge relay system residues Glu610 and His638.

It localises to the cytoplasm. Its function is as follows. Lasso peptide isopeptidase that specifically hydrolyzes Astexin-2 and Astexin-3, converting them to linear peptides. Has only a few specific contacts with substrates, because it recognizes Astexin knotted structure (principally the loop structure). Its binding to lasso peptides opens them to expose the isopeptide bonds for hydrolysis. This is Lasso peptide isopeptidase AtxE2 from Asticcacaulis excentricus (strain ATCC 15261 / DSM 4724 / KCTC 12464 / NCIMB 9791 / VKM B-1370 / CB 48).